We begin with the raw amino-acid sequence, 139 residues long: Nucleoside diphosphate kinase (139 aa).

ATP-binding residues include Lys9, Phe57, Arg85, Thr91, Arg102, and Asn112. The active-site Pros-phosphohistidine intermediate is His115.

This sequence belongs to the NDK family. In terms of assembly, homotetramer. The cofactor is Mg(2+).

Its subcellular location is the cytoplasm. The catalysed reaction is a 2'-deoxyribonucleoside 5'-diphosphate + ATP = a 2'-deoxyribonucleoside 5'-triphosphate + ADP. It carries out the reaction a ribonucleoside 5'-diphosphate + ATP = a ribonucleoside 5'-triphosphate + ADP. Functionally, major role in the synthesis of nucleoside triphosphates other than ATP. The ATP gamma phosphate is transferred to the NDP beta phosphate via a ping-pong mechanism, using a phosphorylated active-site intermediate. The sequence is that of Nucleoside diphosphate kinase from Neorickettsia sennetsu (strain ATCC VR-367 / Miyayama) (Ehrlichia sennetsu).